We begin with the raw amino-acid sequence, 323 residues long: L-lactate dehydrogenase (323 aa).

NAD(+) contacts are provided by residues valine 16, asparagine 37, and 81–82 (GA). Residues glutamine 84, arginine 90, and 122–125 (NPVD) each bind substrate. Residues 120-122 (ATN) and serine 145 contribute to the NAD(+) site. 150-153 (DSAR) contacts substrate. Histidine 177 (proton acceptor) is an active-site residue. Phosphotyrosine is present on tyrosine 221. Threonine 230 contacts substrate.

The protein belongs to the LDH/MDH superfamily. LDH family. In terms of assembly, homotetramer.

It localises to the cytoplasm. The enzyme catalyses (S)-lactate + NAD(+) = pyruvate + NADH + H(+). It functions in the pathway fermentation; pyruvate fermentation to lactate; (S)-lactate from pyruvate: step 1/1. In terms of biological role, catalyzes the conversion of lactate to pyruvate. This Limosilactobacillus reuteri (Lactobacillus reuteri) protein is L-lactate dehydrogenase.